A 597-amino-acid chain; its full sequence is Probable translation initiation factor IF-2 (597 aa).

The 217-residue stretch at 13–229 (LRTPIVCVMG…LLGLAQKFLE (217 aa)) folds into the tr-type G domain. The segment at 22–29 (GHVDHGKT) is G1. 22-29 (GHVDHGKT) serves as a coordination point for GTP. The segment at 47–51 (AITQH) is G2. The segment at 84-87 (DTPG) is G3. GTP-binding positions include 84-88 (DTPGH) and 138-141 (NKID). The interval 138–141 (NKID) is G4. A G5 region spans residues 206-208 (SAV).

This sequence belongs to the TRAFAC class translation factor GTPase superfamily. Classic translation factor GTPase family. IF-2 subfamily.

Function in general translation initiation by promoting the binding of the formylmethionine-tRNA to ribosomes. Seems to function along with eIF-2. The polypeptide is Probable translation initiation factor IF-2 (Methanosarcina acetivorans (strain ATCC 35395 / DSM 2834 / JCM 12185 / C2A)).